A 90-amino-acid polypeptide reads, in one-letter code: uncharacterized protein (90 aa).

Residues 1–20 (MEKLFVLVFALTLLAFSSEA) form the signal peptide. The interval 31–50 (QLLRSRRQDRPSKPGFPDEP) is disordered.

It localises to the secreted. This is an uncharacterized protein from Rattus norvegicus (Rat).